We begin with the raw amino-acid sequence, 159 residues long: Ribosome maturation factor RimP (159 aa).

Belongs to the RimP family.

Its subcellular location is the cytoplasm. Required for maturation of 30S ribosomal subunits. The sequence is that of Ribosome maturation factor RimP from Geotalea uraniireducens (strain Rf4) (Geobacter uraniireducens).